An 860-amino-acid polypeptide reads, in one-letter code: DNA gyrase subunit A (860 aa).

In terms of domain architecture, Topo IIA-type catalytic spans 34–503; the sequence is LPDARDGLKP…EDGELIDTDL (470 aa). Tyr122 functions as the O-(5'-phospho-DNA)-tyrosine intermediate in the catalytic mechanism. The short motif at 530–536 is the GyrA-box element; it reads QNRATRG.

This sequence belongs to the type II topoisomerase GyrA/ParC subunit family. As to quaternary structure, heterotetramer, composed of two GyrA and two GyrB chains. In the heterotetramer, GyrA contains the active site tyrosine that forms a transient covalent intermediate with DNA, while GyrB binds cofactors and catalyzes ATP hydrolysis.

It is found in the cytoplasm. It catalyses the reaction ATP-dependent breakage, passage and rejoining of double-stranded DNA.. Its function is as follows. A type II topoisomerase that negatively supercoils closed circular double-stranded (ds) DNA in an ATP-dependent manner to modulate DNA topology and maintain chromosomes in an underwound state. Negative supercoiling favors strand separation, and DNA replication, transcription, recombination and repair, all of which involve strand separation. Also able to catalyze the interconversion of other topological isomers of dsDNA rings, including catenanes and knotted rings. Type II topoisomerases break and join 2 DNA strands simultaneously in an ATP-dependent manner. This is DNA gyrase subunit A from Synechocystis sp. (strain ATCC 27184 / PCC 6803 / Kazusa).